A 426-amino-acid chain; its full sequence is Glutamate-1-semialdehyde 2,1-aminomutase (426 aa).

Lys-265 carries the post-translational modification N6-(pyridoxal phosphate)lysine.

The protein belongs to the class-III pyridoxal-phosphate-dependent aminotransferase family. HemL subfamily. In terms of assembly, homodimer. Pyridoxal 5'-phosphate serves as cofactor.

Its subcellular location is the cytoplasm. It catalyses the reaction (S)-4-amino-5-oxopentanoate = 5-aminolevulinate. The protein operates within porphyrin-containing compound metabolism; protoporphyrin-IX biosynthesis; 5-aminolevulinate from L-glutamyl-tRNA(Glu): step 2/2. The sequence is that of Glutamate-1-semialdehyde 2,1-aminomutase from Salmonella newport (strain SL254).